Here is a 742-residue protein sequence, read N- to C-terminus: Phosphoribosylformylglycinamidine synthase subunit PurL (742 aa).

Residue His-54 is part of the active site. Tyr-57 and Lys-96 together coordinate ATP. Glu-98 contacts Mg(2+). Residues 99 to 102 and Arg-121 each bind substrate; that span reads SHNH. Catalysis depends on His-100, which acts as the Proton acceptor. Residue Asp-122 coordinates Mg(2+). Residue Gln-245 coordinates substrate. Asp-273 is a binding site for Mg(2+). Residue 317–319 participates in substrate binding; it reads ESQ. Positions 500 and 537 each coordinate ATP. Asn-538 lines the Mg(2+) pocket. Ser-540 lines the substrate pocket.

The protein belongs to the FGAMS family. As to quaternary structure, monomer. Part of the FGAM synthase complex composed of 1 PurL, 1 PurQ and 2 PurS subunits.

It localises to the cytoplasm. The catalysed reaction is N(2)-formyl-N(1)-(5-phospho-beta-D-ribosyl)glycinamide + L-glutamine + ATP + H2O = 2-formamido-N(1)-(5-O-phospho-beta-D-ribosyl)acetamidine + L-glutamate + ADP + phosphate + H(+). The protein operates within purine metabolism; IMP biosynthesis via de novo pathway; 5-amino-1-(5-phospho-D-ribosyl)imidazole from N(2)-formyl-N(1)-(5-phospho-D-ribosyl)glycinamide: step 1/2. Functionally, part of the phosphoribosylformylglycinamidine synthase complex involved in the purines biosynthetic pathway. Catalyzes the ATP-dependent conversion of formylglycinamide ribonucleotide (FGAR) and glutamine to yield formylglycinamidine ribonucleotide (FGAM) and glutamate. The FGAM synthase complex is composed of three subunits. PurQ produces an ammonia molecule by converting glutamine to glutamate. PurL transfers the ammonia molecule to FGAR to form FGAM in an ATP-dependent manner. PurS interacts with PurQ and PurL and is thought to assist in the transfer of the ammonia molecule from PurQ to PurL. The polypeptide is Phosphoribosylformylglycinamidine synthase subunit PurL (Geobacillus thermodenitrificans (strain NG80-2)).